Reading from the N-terminus, the 205-residue chain is Large ribosomal subunit protein uL4 (205 aa).

Residues 43–78 (ARAGTKAQKTRSEVAGGGKKPWRQKGTGNARAGTIR) are disordered.

The protein belongs to the universal ribosomal protein uL4 family. As to quaternary structure, part of the 50S ribosomal subunit.

One of the primary rRNA binding proteins, this protein initially binds near the 5'-end of the 23S rRNA. It is important during the early stages of 50S assembly. It makes multiple contacts with different domains of the 23S rRNA in the assembled 50S subunit and ribosome. Functionally, forms part of the polypeptide exit tunnel. This is Large ribosomal subunit protein uL4 from Halorhodospira halophila (strain DSM 244 / SL1) (Ectothiorhodospira halophila (strain DSM 244 / SL1)).